Reading from the N-terminus, the 203-residue chain is Peptidyl-tRNA hydrolase (203 aa).

Tyr26 lines the tRNA pocket. Catalysis depends on His31, which acts as the Proton acceptor. 3 residues coordinate tRNA: Tyr82, Asn84, and Asn130.

It belongs to the PTH family. As to quaternary structure, monomer.

The protein localises to the cytoplasm. It carries out the reaction an N-acyl-L-alpha-aminoacyl-tRNA + H2O = an N-acyl-L-amino acid + a tRNA + H(+). Its function is as follows. Hydrolyzes ribosome-free peptidyl-tRNAs (with 1 or more amino acids incorporated), which drop off the ribosome during protein synthesis, or as a result of ribosome stalling. Catalyzes the release of premature peptidyl moieties from peptidyl-tRNA molecules trapped in stalled 50S ribosomal subunits, and thus maintains levels of free tRNAs and 50S ribosomes. The sequence is that of Peptidyl-tRNA hydrolase from Streptomyces avermitilis (strain ATCC 31267 / DSM 46492 / JCM 5070 / NBRC 14893 / NCIMB 12804 / NRRL 8165 / MA-4680).